The primary structure comprises 137 residues: Cucumber peeling cupredoxin (137 aa).

Position 1 is a pyrrolidone carboxylic acid (Gln1). In terms of domain architecture, Phytocyanin spans 3–107 (TVHIVGDNTG…GQKLSINVVA (105 aa)). His46, Cys89, His94, and Gln99 together coordinate Cu cation. An intrachain disulfide couples Cys60 to Cys95. A glycan (N-linked (GlcNAc...) asparagine) is linked at Asn109. The segment at 112-137 (VSMPPPSSSPPSSVMPPPVMPPPSPS) is disordered. Pro residues predominate over residues 114 to 137 (MPPPSSSPPSSVMPPPVMPPPSPS). Position 115 is a 4-hydroxyproline; partial (Pro115). 4 positions are modified to 4-hydroxyproline: Pro116, Pro117, Pro121, and Pro122. A 4-hydroxyproline; partial modification is found at Pro127. A 4-hydroxyproline mark is found at Pro128, Pro129, Pro133, Pro134, and Pro136.

The sequence is that of Cucumber peeling cupredoxin from Cucumis sativus (Cucumber).